The sequence spans 212 residues: ATP-dependent Clp protease proteolytic subunit (212 aa).

The Nucleophile role is filled by Ser109. His134 is a catalytic residue.

The protein belongs to the peptidase S14 family. Fourteen ClpP subunits assemble into 2 heptameric rings which stack back to back to give a disk-like structure with a central cavity, resembling the structure of eukaryotic proteasomes.

Its subcellular location is the cytoplasm. It carries out the reaction Hydrolysis of proteins to small peptides in the presence of ATP and magnesium. alpha-casein is the usual test substrate. In the absence of ATP, only oligopeptides shorter than five residues are hydrolyzed (such as succinyl-Leu-Tyr-|-NHMec, and Leu-Tyr-Leu-|-Tyr-Trp, in which cleavage of the -Tyr-|-Leu- and -Tyr-|-Trp bonds also occurs).. Functionally, cleaves peptides in various proteins in a process that requires ATP hydrolysis. Has a chymotrypsin-like activity. Plays a major role in the degradation of misfolded proteins. The sequence is that of ATP-dependent Clp protease proteolytic subunit from Bdellovibrio bacteriovorus (strain ATCC 15356 / DSM 50701 / NCIMB 9529 / HD100).